A 793-amino-acid chain; its full sequence is Probable alpha-fucosidase A (793 aa).

Residues methionine 1 to alanine 20 form the signal peptide. N-linked (GlcNAc...) asparagine glycosylation is found at asparagine 30, asparagine 83, asparagine 100, asparagine 104, asparagine 123, asparagine 179, asparagine 199, asparagine 234, asparagine 323, asparagine 597, asparagine 622, asparagine 660, and asparagine 757.

The protein belongs to the glycosyl hydrolase 95 family.

It is found in the secreted. The enzyme catalyses an alpha-L-fucoside + H2O = L-fucose + an alcohol. Alpha-fucosidase involved in degradation of fucosylated xyloglucans. Hydrolyzes alpha-1,2-linked fucose. The protein is Probable alpha-fucosidase A (afcA) of Aspergillus niger (strain ATCC MYA-4892 / CBS 513.88 / FGSC A1513).